The following is a 387-amino-acid chain: Mannitol-1-phosphate 5-dehydrogenase (387 aa).

Ala-3–Gly-14 provides a ligand contact to NAD(+).

Belongs to the mannitol dehydrogenase family.

It carries out the reaction D-mannitol 1-phosphate + NAD(+) = beta-D-fructose 6-phosphate + NADH + H(+). In Yersinia pseudotuberculosis serotype O:3 (strain YPIII), this protein is Mannitol-1-phosphate 5-dehydrogenase.